Consider the following 435-residue polypeptide: Putative F-box/kelch-repeat protein At1g20790 (435 aa).

The F-box domain maps to 1 to 49 (MKRLPLHLLDEILFNLDPKSLGKMRCTNKSINTHISDDPNFKFEYFSRI). Kelch repeat units follow at residues 192-238 (PVYV…CTGD) and 280-335 (LYWN…LFKP).

The chain is Putative F-box/kelch-repeat protein At1g20790 from Arabidopsis thaliana (Mouse-ear cress).